The following is a 507-amino-acid chain: ATP synthase subunit alpha, chloroplastic (507 aa).

170-177 (GDRQTGKT) lines the ATP pocket.

It belongs to the ATPase alpha/beta chains family. In terms of assembly, F-type ATPases have 2 components, CF(1) - the catalytic core - and CF(0) - the membrane proton channel. CF(1) has five subunits: alpha(3), beta(3), gamma(1), delta(1), epsilon(1). CF(0) has four main subunits: a, b, b' and c.

It localises to the plastid. It is found in the chloroplast thylakoid membrane. The enzyme catalyses ATP + H2O + 4 H(+)(in) = ADP + phosphate + 5 H(+)(out). Functionally, produces ATP from ADP in the presence of a proton gradient across the membrane. The alpha chain is a regulatory subunit. The sequence is that of ATP synthase subunit alpha, chloroplastic from Spinacia oleracea (Spinach).